We begin with the raw amino-acid sequence, 68 residues long: DNA gyrase inhibitor YacG (68 aa).

Zn(2+) contacts are provided by Cys10, Cys13, Cys29, and Cys33.

The protein belongs to the DNA gyrase inhibitor YacG family. In terms of assembly, interacts with GyrB. The cofactor is Zn(2+).

Inhibits all the catalytic activities of DNA gyrase by preventing its interaction with DNA. Acts by binding directly to the C-terminal domain of GyrB, which probably disrupts DNA binding by the gyrase. The protein is DNA gyrase inhibitor YacG of Haemophilus influenzae (strain PittGG).